We begin with the raw amino-acid sequence, 123 residues long: Large ribosomal subunit protein uL14 (123 aa).

It belongs to the universal ribosomal protein uL14 family. In terms of assembly, part of the 50S ribosomal subunit. Forms a cluster with proteins L3 and L19. In the 70S ribosome, L14 and L19 interact and together make contacts with the 16S rRNA in bridges B5 and B8.

Its function is as follows. Binds to 23S rRNA. Forms part of two intersubunit bridges in the 70S ribosome. The sequence is that of Large ribosomal subunit protein uL14 from Sodalis glossinidius (strain morsitans).